We begin with the raw amino-acid sequence, 328 residues long: Lipoyl synthase (328 aa).

[4Fe-4S] cluster-binding residues include Cys56, Cys61, Cys67, Cys82, Cys86, Cys89, and Ser298. The Radical SAM core domain maps to 68-287 (WEDREATFLI…KEEAEEIGFS (220 aa)).

The protein belongs to the radical SAM superfamily. Lipoyl synthase family. [4Fe-4S] cluster serves as cofactor.

The protein resides in the cytoplasm. It catalyses the reaction [[Fe-S] cluster scaffold protein carrying a second [4Fe-4S](2+) cluster] + N(6)-octanoyl-L-lysyl-[protein] + 2 oxidized [2Fe-2S]-[ferredoxin] + 2 S-adenosyl-L-methionine + 4 H(+) = [[Fe-S] cluster scaffold protein] + N(6)-[(R)-dihydrolipoyl]-L-lysyl-[protein] + 4 Fe(3+) + 2 hydrogen sulfide + 2 5'-deoxyadenosine + 2 L-methionine + 2 reduced [2Fe-2S]-[ferredoxin]. It functions in the pathway protein modification; protein lipoylation via endogenous pathway; protein N(6)-(lipoyl)lysine from octanoyl-[acyl-carrier-protein]: step 2/2. Catalyzes the radical-mediated insertion of two sulfur atoms into the C-6 and C-8 positions of the octanoyl moiety bound to the lipoyl domains of lipoate-dependent enzymes, thereby converting the octanoylated domains into lipoylated derivatives. This Streptomyces avermitilis (strain ATCC 31267 / DSM 46492 / JCM 5070 / NBRC 14893 / NCIMB 12804 / NRRL 8165 / MA-4680) protein is Lipoyl synthase.